Reading from the N-terminus, the 1026-residue chain is Beta-galactosidase (1026 aa).

Glu-458 functions as the Proton donor in the catalytic mechanism. Glu-546 (nucleophile) is an active-site residue.

Belongs to the glycosyl hydrolase 2 family.

The enzyme catalyses Hydrolysis of terminal non-reducing beta-D-galactose residues in beta-D-galactosides.. The sequence is that of Beta-galactosidase (lacZ) from Streptococcus thermophilus.